Consider the following 340-residue polypeptide: Probable cyclic nucleotide phosphodiesterase PsycPRwf_0181 (340 aa).

The interval methionine 1–aspartate 36 is disordered. Fe cation contacts are provided by aspartate 47, histidine 49, aspartate 128, asparagine 158, histidine 237, histidine 276, and histidine 278. Residues histidine 49, aspartate 128, and asparagine 158 to histidine 159 contribute to the AMP site. Histidine 278 is a binding site for AMP.

It belongs to the cyclic nucleotide phosphodiesterase class-III family. Requires Fe(2+) as cofactor.

The polypeptide is Probable cyclic nucleotide phosphodiesterase PsycPRwf_0181 (Psychrobacter sp. (strain PRwf-1)).